The following is a 993-amino-acid chain: MIIKNIKMENFRSHRNTSINFSKGITSIIGQNGSGKSSIFQAMNFALFAPRGNNFRIENLMQQGAASFSVELEFEMMGNTYLVKRKRFQHKTDDKLYVNGKLNAESASEINKKIEEILEIDNSVFSNAIYIKQGEIANLIQMTPRDRKEVIGKLLGIEKYEKASEKMNIVKKSYEETLLKLEGELTQEPEILENLEKLKNEVSESEILKEEILKKYENLEKLKLEKNSEILQMEEKFAENNQLKENLKDIISEIKNINLEIQNFKNSLNLVAEESKNISENEENYKKYLELELKIKELNNKLIGHKSNYESYNKLKTIEESLLKELGVLKESLKDNKKNPDELKENLKENDEKILILDKIKEKIKELEFIEKQIYEIKIHKKTVETLFDSVKIYDDSIKTFEELKTKKNSYENLLKEKFDLEKKLQNETDEKTKLISELTDFEKIEEKINLENELKEKYEDLSEKIDKLNEIVLKKESKISEYKNSKAELEKTKDSCHVCQSKITEEKKQELLEKYNSEIQNEQLSTESLKKQLEIILNKKEKMKVKLNEIDSFKLKYGELKEKKNYSLKVEESIIETTEKLNELTGKINEYSSLNDEISLIENKLKNLENDYKNCNYSSQFLTKNDESEFLTKKLELSKIIGDYDSSKIENEKKSLENLKDELKNTIYNLEREINLKKELKNIQNDISSKIGIVECYVKWETEKSDFENKLSECKENYEKYMESLAVLKNYSKTYSVEINNLNEFLNQKIAEKQQFCEKLLETRTEIEKNIQTVNYNPELHENAKRLYENILNEFNDILRTLERISSELKLKNENISYLNEKIQNLSNKKEEKKKIEEFKEYLDKIKREIFSKDGFQKYLREKYIPLIQRHTNQIFQEFELPYSHIQLKDDYSLIVDGLPVETLSGGEQIAVSLALRLGISKAVCNNIECIILDEPTAYLDEDRRKNLLNIFKNIKTINQMAIITHHQELEQIADNIVKVRKIGENSKVSLE.

ATP is bound by residues Arg12, 32-38 (NGSGKSS), and Gln133. Coiled coils occupy residues 192–222 (LENL…LEKL) and 402–493 (EELK…LEKT). The Zinc-hook domain maps to 452 to 556 (ENELKEKYED…KLNEIDSFKL (105 aa)). Residues Cys497 and Cys500 each coordinate Zn(2+). Coiled-coil stretches lie at residues 570 to 612 (KVEE…LEND), 646 to 677 (DSSK…EINL), and 702 to 731 (ETEK…VLKN).

The protein belongs to the SMC family. RAD50 subfamily. As to quaternary structure, homodimer. Forms a heterotetramer composed of two Mre11 subunits and two Rad50 subunits. Zn(2+) is required as a cofactor.

Part of the Rad50/Mre11 complex, which is involved in the early steps of DNA double-strand break (DSB) repair. The complex may facilitate opening of the processed DNA ends to aid in the recruitment of HerA and NurA. Rad50 controls the balance between DNA end bridging and DNA resection via ATP-dependent structural rearrangements of the Rad50/Mre11 complex. The chain is DNA double-strand break repair Rad50 ATPase from Methanococcus maripaludis (strain DSM 14266 / JCM 13030 / NBRC 101832 / S2 / LL).